Reading from the N-terminus, the 83-residue chain is MGSSKLMVTCIVVAMLTISCDILSVEMGISVQALPPTCGPDCTGRFMNQDCSKYCAALSYKHGVCILFRGLPPRTSTLRCCCG.

Residues 1 to 24 (MGSSKLMVTCIVVAMLTISCDILS) form the signal peptide. Cystine bridges form between Cys-38/Cys-82, Cys-42/Cys-65, Cys-51/Cys-80, and Cys-55/Cys-81.

Belongs to the DEFL family.

It is found in the secreted. The polypeptide is Putative defensin-like protein 67 (Arabidopsis thaliana (Mouse-ear cress)).